The chain runs to 91 residues: Small ribosomal subunit protein bS18 (91 aa).

The span at 1–14 (MTNQNQSQTQTTQT) shows a compositional bias: low complexity. The interval 1 to 24 (MTNQNQSQTQTTQTVEKVSSRQKK) is disordered.

Belongs to the bacterial ribosomal protein bS18 family. Part of the 30S ribosomal subunit. Forms a tight heterodimer with protein bS6.

In terms of biological role, binds as a heterodimer with protein bS6 to the central domain of the 16S rRNA, where it helps stabilize the platform of the 30S subunit. The polypeptide is Small ribosomal subunit protein bS18 (Caldicellulosiruptor saccharolyticus (strain ATCC 43494 / DSM 8903 / Tp8T 6331)).